Here is a 104-residue protein sequence, read N- to C-terminus: L-rhamnose mutarotase (104 aa).

Tyr18 contacts substrate. Catalysis depends on His22, which acts as the Proton donor. Residues Tyr41 and 76-77 contribute to the substrate site; that span reads WW.

The protein belongs to the rhamnose mutarotase family. In terms of assembly, homodimer.

It localises to the cytoplasm. It catalyses the reaction alpha-L-rhamnose = beta-L-rhamnose. Its pathway is carbohydrate metabolism; L-rhamnose metabolism. Involved in the anomeric conversion of L-rhamnose. The protein is L-rhamnose mutarotase of Cronobacter sakazakii (strain ATCC BAA-894) (Enterobacter sakazakii).